Consider the following 108-residue polypeptide: MPKPGILKSKSMFCVIYRSSKRDQTYLYVEKKDDFSRVPEELMKGFGQPQLAMILPLDGRKKLVNADIEKVKLALTEQGYYLQLPPPPEDLLKQHLSVMGQKTDDTNK.

The YcgL domain occupies 12-96 (MFCVIYRSSK…PPEDLLKQHL (85 aa)).

This is Protein YcgL from Escherichia coli O9:H4 (strain HS).